A 204-amino-acid chain; its full sequence is uncharacterized protein (204 aa).

Cys-52 serves as the catalytic Acyl-thioester intermediate. Catalysis depends on residues His-89 and Asp-104.

The protein belongs to the arylamine N-acetyltransferase family.

This is an uncharacterized protein from Acanthamoeba polyphaga mimivirus (APMV).